Reading from the N-terminus, the 324-residue chain is uncharacterized protein (324 aa).

The protein to the C-terminal of para-aminobenzoate synthase component I.

This is an uncharacterized protein from Pasteurella multocida (strain Pm70).